We begin with the raw amino-acid sequence, 113 residues long: Antisense of depressing factor protein 1 (113 aa).

Residues 1–11 are compositionally biased toward basic residues; it reads MGKCSMKKKGV. A disordered region spans residues 1-35; the sequence is MGKCSMKKKGVGKNVGVGKKVQKKRSISTAERKRT.

It belongs to the ADF1 family.

The protein localises to the nucleus. Its function is as follows. Transcriptional repressor which negatively regulates transcription of FYV5 by binding to the promoter on the sense strand. The protein is Antisense of depressing factor protein 1 of Saccharomyces cerevisiae (strain ATCC 204508 / S288c) (Baker's yeast).